The following is a 192-amino-acid chain: 3-isopropylmalate dehydratase small subunit (192 aa).

Belongs to the LeuD family. LeuD type 1 subfamily. Heterodimer of LeuC and LeuD.

It catalyses the reaction (2R,3S)-3-isopropylmalate = (2S)-2-isopropylmalate. The protein operates within amino-acid biosynthesis; L-leucine biosynthesis; L-leucine from 3-methyl-2-oxobutanoate: step 2/4. In terms of biological role, catalyzes the isomerization between 2-isopropylmalate and 3-isopropylmalate, via the formation of 2-isopropylmaleate. The chain is 3-isopropylmalate dehydratase small subunit from Oceanobacillus iheyensis (strain DSM 14371 / CIP 107618 / JCM 11309 / KCTC 3954 / HTE831).